We begin with the raw amino-acid sequence, 289 residues long: Cbb3-type cytochrome c oxidase subunit FixP (289 aa).

At 1-33 (MADKHKHVDEVSGVETTGHEWDGIRELNNPLPR) the chain is on the cytoplasmic side. A helical membrane pass occupies residues 34-56 (WWVYSFYATIIWAIGYAVAYPSW). Over 57 to 289 (PMLTEATKGV…VFVHSLGGGE (233 aa)) the chain is Periplasmic. Cytochrome c domains lie at 110–198 (FAVS…MSLT) and 205–286 (HLVE…HSLG). The heme c site is built by Cys-123, Cys-126, His-127, Met-175, Cys-218, Cys-221, His-222, and Met-263.

The protein belongs to the CcoP / FixP family. Component of the cbb3-type cytochrome c oxidase at least composed of FixN, FixO, FixQ and FixP. Heme c serves as cofactor.

The protein resides in the cell inner membrane. It participates in energy metabolism; oxidative phosphorylation. C-type cytochrome. Part of the cbb3-type cytochrome c oxidase complex. FixP subunit is required for transferring electrons from donor cytochrome c via its heme groups to FixO subunit. From there, electrons are shuttled to the catalytic binuclear center of FixN subunit where oxygen reduction takes place. The complex also functions as a proton pump. The protein is Cbb3-type cytochrome c oxidase subunit FixP of Sinorhizobium medicae (strain WSM419) (Ensifer medicae).